The following is a 102-amino-acid chain: MEQQQQQQQLRNLRDFLLVYNRMTELCFQRCVPSLHHRALDAEEEACLHSCAGKLIHSNHRLMAAYVQLMPALVQRRIADYEAASAVPGVAAEQPGVSPSGS.

The short motif at 27 to 51 (CFQRCVPSLHHRALDAEEEACLHSC) is the Twin CX3C motif element. Intrachain disulfides connect cysteine 27–cysteine 51 and cysteine 31–cysteine 47.

As to quaternary structure, component of the TIM22 complex, which core is composed of TIMM22, associated with TIMM10 (TIMM10A and/or TIMM10B), TIMM9, AGK and TIMM29.

It localises to the mitochondrion inner membrane. Component of the TIM22 complex, a complex that mediates the import and insertion of multi-pass transmembrane proteins into the mitochondrial inner membrane. The TIM22 complex forms a twin-pore translocase that uses the membrane potential as the external driving force. In the TIM22 complex, it may act as a docking point for the soluble 70 kDa complex that guides the target proteins in transit through the aqueous mitochondrial intermembrane space. In Pongo abelii (Sumatran orangutan), this protein is Mitochondrial import inner membrane translocase subunit Tim10 B (TIMM10B).